The primary structure comprises 399 residues: Argininosuccinate synthase (399 aa).

9 to 17 is an ATP binding site; that stretch reads AYSGGLDTS. An L-citrulline-binding site is contributed by Tyr-85. Gly-115 contributes to the ATP binding site. The L-aspartate site is built by Thr-117, Asn-121, and Asp-122. Asn-121 is an L-citrulline binding site. The L-citrulline site is built by Arg-125, Ser-173, Glu-258, and Tyr-270.

Belongs to the argininosuccinate synthase family. Type 1 subfamily. As to quaternary structure, homotetramer.

It localises to the cytoplasm. The catalysed reaction is L-citrulline + L-aspartate + ATP = 2-(N(omega)-L-arginino)succinate + AMP + diphosphate + H(+). Its pathway is amino-acid biosynthesis; L-arginine biosynthesis; L-arginine from L-ornithine and carbamoyl phosphate: step 2/3. In Streptococcus thermophilus (strain CNRZ 1066), this protein is Argininosuccinate synthase.